The following is a 257-amino-acid chain: RNA polymerase sigma-G factor (257 aa).

Positions 66-79 (DLFQVGCIGLIKSI) match the Polymerase core binding motif. The H-T-H motif DNA-binding region spans 228–247 (QMEVADEIGISQAQVSRLEK).

Belongs to the sigma-70 factor family.

Sigma factors are initiation factors that promote the attachment of RNA polymerase to specific initiation sites and are then released. This sigma factor is responsible for the expression of sporulation specific genes. The polypeptide is RNA polymerase sigma-G factor (sigG) (Clostridium acetobutylicum (strain ATCC 824 / DSM 792 / JCM 1419 / IAM 19013 / LMG 5710 / NBRC 13948 / NRRL B-527 / VKM B-1787 / 2291 / W)).